Consider the following 344-residue polypeptide: Uroporphyrinogen decarboxylase (344 aa).

Substrate contacts are provided by residues 25–29 (RQAGR), Asp-75, Tyr-152, Ser-207, and His-323.

Belongs to the uroporphyrinogen decarboxylase family. Homodimer.

The protein resides in the cytoplasm. It catalyses the reaction uroporphyrinogen III + 4 H(+) = coproporphyrinogen III + 4 CO2. It functions in the pathway porphyrin-containing compound metabolism; protoporphyrin-IX biosynthesis; coproporphyrinogen-III from 5-aminolevulinate: step 4/4. Catalyzes the decarboxylation of four acetate groups of uroporphyrinogen-III to yield coproporphyrinogen-III. The protein is Uroporphyrinogen decarboxylase of Roseobacter denitrificans (strain ATCC 33942 / OCh 114) (Erythrobacter sp. (strain OCh 114)).